The primary structure comprises 299 residues: Ent-kaurene oxidase-like protein 1 (299 aa).

The chain crosses the membrane as a helical span at residues 16-36 (AVVGVFVAAAVVGGFVAAVAL).

The protein belongs to the cytochrome P450 family. Expressed in roots and panicles.

It is found in the membrane. This is Ent-kaurene oxidase-like protein 1 from Oryza sativa subsp. japonica (Rice).